We begin with the raw amino-acid sequence, 140 residues long: Large ribosomal subunit protein uL22c (140 aa).

It belongs to the universal ribosomal protein uL22 family. Part of the 50S ribosomal subunit.

It localises to the plastid. The protein localises to the chloroplast. Its function is as follows. This protein binds specifically to 23S rRNA. Functionally, the globular domain of the protein is located near the polypeptide exit tunnel on the outside of the subunit, while an extended beta-hairpin is found that lines the wall of the exit tunnel in the center of the 70S ribosome. The protein is Large ribosomal subunit protein uL22c (rpl22) of Calycanthus floridus var. glaucus (Eastern sweetshrub).